The sequence spans 133 residues: Small ribosomal subunit protein uS8 (133 aa).

It belongs to the universal ribosomal protein uS8 family. In terms of assembly, part of the 30S ribosomal subunit. Contacts proteins S5 and S12.

Its function is as follows. One of the primary rRNA binding proteins, it binds directly to 16S rRNA central domain where it helps coordinate assembly of the platform of the 30S subunit. The sequence is that of Small ribosomal subunit protein uS8 from Prochlorococcus marinus (strain MIT 9312).